The following is a 177-amino-acid chain: MLDAFSRVVTNADSKAAYVGGADLQALKKFISEGNKRLDSVNSIVSNASCIVSDAVSGMICENPSLISPSGNCYTNRRMAACLRDGEIILRYVSYALLSGDASVLEDRCLNGLKETYSSLGVPANSNARAVSIMKACAVAFVNNTASQKKLSTPQGDCSGLASEVGGYFDKVTAAIS.

Residues lysine 28, asparagine 35, aspartate 39, cysteine 50, aspartate 54, cysteine 61, asparagine 72, 77-78, cysteine 82, arginine 129, 147-148, 154-158, and cysteine 158 contribute to the (2R,3E)-phycoerythrobilin site; these read RR, SQ, and PQGDC. Asparagine 72 is modified (N4-methylasparagine).

It belongs to the phycobiliprotein family. As to quaternary structure, heterotetramer of 2 different alpha chains and 2 identical beta chains. The subunit composition could comprise any combination of 2 out of 4 different alpha units with an invariant beta unit. Contains three covalently linked phycoerythrobilin chromophores.

The protein resides in the plastid. The protein localises to the chloroplast thylakoid membrane. Its function is as follows. Light-harvesting photosynthetic tetrapyrrole chromophore-protein from the phycobiliprotein complex. The polypeptide is B-phycoerythrin beta chain (cpeB) (Rhodomonas sp. (strain CS 24) (Chroomonas sp. (strain CS24))).